The primary structure comprises 111 residues: Tubulin beta chain (111 aa).

A disordered region spans residues 82-111 (SEYQQYQDATAEDEGEFDEEEAEGEGQEYA). A compositionally biased stretch (acidic residues) spans 91–111 (TAEDEGEFDEEEAEGEGQEYA).

Belongs to the tubulin family. In terms of assembly, dimer of alpha and beta chains. A typical microtubule is a hollow water-filled tube with an outer diameter of 25 nm and an inner diameter of 15 nM. Alpha-beta heterodimers associate head-to-tail to form protofilaments running lengthwise along the microtubule wall with the beta-tubulin subunit facing the microtubule plus end conferring a structural polarity. Microtubules usually have 13 protofilaments but different protofilament numbers can be found in some organisms and specialized cells. The cofactor is Mg(2+).

It is found in the cytoplasm. Its subcellular location is the cytoskeleton. In terms of biological role, tubulin is the major constituent of microtubules, a cylinder consisting of laterally associated linear protofilaments composed of alpha- and beta-tubulin heterodimers. Microtubules grow by the addition of GTP-tubulin dimers to the microtubule end, where a stabilizing cap forms. Below the cap, tubulin dimers are in GDP-bound state, owing to GTPase activity of alpha-tubulin. The protein is Tubulin beta chain of Lymnaea stagnalis (Great pond snail).